The following is a 302-amino-acid chain: Oxygen-dependent coproporphyrinogen-III oxidase (302 aa).

Ser94 lines the substrate pocket. Residues His98 and His108 each coordinate a divalent metal cation. His108 acts as the Proton donor in catalysis. A substrate-binding site is contributed by Asn110–Arg112. A divalent metal cation-binding residues include His147 and His177. Residues Tyr242 to Gln277 are important for dimerization. A substrate-binding site is contributed by Gly260 to Arg262.

This sequence belongs to the aerobic coproporphyrinogen-III oxidase family. Homodimer. A divalent metal cation is required as a cofactor.

It localises to the cytoplasm. The enzyme catalyses coproporphyrinogen III + O2 + 2 H(+) = protoporphyrinogen IX + 2 CO2 + 2 H2O. The protein operates within porphyrin-containing compound metabolism; protoporphyrin-IX biosynthesis; protoporphyrinogen-IX from coproporphyrinogen-III (O2 route): step 1/1. Functionally, involved in the heme biosynthesis. Catalyzes the aerobic oxidative decarboxylation of propionate groups of rings A and B of coproporphyrinogen-III to yield the vinyl groups in protoporphyrinogen-IX. The polypeptide is Oxygen-dependent coproporphyrinogen-III oxidase (Shewanella sp. (strain ANA-3)).